A 119-amino-acid polypeptide reads, in one-letter code: Small ribosomal subunit protein bS16 (119 aa).

The protein belongs to the bacterial ribosomal protein bS16 family.

In Chlamydia abortus (strain DSM 27085 / S26/3) (Chlamydophila abortus), this protein is Small ribosomal subunit protein bS16.